A 533-amino-acid polypeptide reads, in one-letter code: Monogalactosyldiacylglycerol synthase 1, chloroplastic (533 aa).

A 1,2-diacyl-sn-glycero-3-phospho-(1'-sn-glycerol) is bound by residues His-155 and Pro-189. His-155 serves as a coordination point for UDP. The required for binding to diacyl glycerol stretch occupies residues 192–215 (QLPRSYNFLVKHGTLWKMTYYGTS). Residues Arg-324, Phe-413, Ile-414, 434 to 438 (GTIAE), and Glu-456 each bind UDP.

This sequence belongs to the glycosyltransferase 28 family. As to quaternary structure, homodimer. Expressed in roots, stems, leaves, flowers, siliques and seeds.

It is found in the plastid. Its subcellular location is the chloroplast inner membrane. The catalysed reaction is a 1,2-diacyl-sn-glycerol + UDP-alpha-D-galactose = a 1,2-diacyl-3-O-(beta-D-galactosyl)-sn-glycerol + UDP + H(+). It carries out the reaction 1,2-di-(9Z,12Z-octadecadienoyl)-sn-glycerol + UDP-alpha-D-galactose = 1,2-di-(9Z,12Z-octadecadienoyl)-3-beta-D-galactosyl-sn-glycerol + UDP + H(+). The enzyme catalyses 1-(9Z-octadecenoyl)-2-hexadecanoyl-sn-glycerol + UDP-alpha-D-galactose = 1-(9Z-octadecenoyl)-2-hexadecanoyl-3-beta-D-galactosyl-sn-glycerol + UDP + H(+). It catalyses the reaction 1,2-di-(9Z-octadecenoyl)-sn-glycerol + UDP-alpha-D-galactose = 1,2-di-(9Z-octadecenoyl)-3-beta-D-galactosyl-sn-glycerol + UDP + H(+). Activated by phosphatidate (PA) and phosphatidylglycerol (PG). Inhibited by galvestine-1. Functionally, involved in the synthesis of the major structural component of photosynthetic membranes. Required for proper thylakoid membrane biogenesis. Does not discriminate between prokaryotic (18:1/16:0) or eukaryotic (18:2/18:2) 1,2-diacylglycerol species, but operates with some preference for the prokaryotic one. Is responsible for most galactolipid synthesis in chloroplasts. Required for the formation of thylakoid membranes and functional photosynthetic electron transport during cotyledons greening in young seedlings. May link galactolipid synthesis with the coordinated transcriptional regulation of chloroplasts and other organelles during cotyledon greening. The sequence is that of Monogalactosyldiacylglycerol synthase 1, chloroplastic from Arabidopsis thaliana (Mouse-ear cress).